Consider the following 286-residue polypeptide: Acetylglutamate kinase (286 aa).

Substrate-binding positions include 69-70, Arg91, and Asn185; that span reads GG.

Belongs to the acetylglutamate kinase family. ArgB subfamily.

Its subcellular location is the cytoplasm. It catalyses the reaction N-acetyl-L-glutamate + ATP = N-acetyl-L-glutamyl 5-phosphate + ADP. Its pathway is amino-acid biosynthesis; L-arginine biosynthesis; N(2)-acetyl-L-ornithine from L-glutamate: step 2/4. In terms of biological role, catalyzes the ATP-dependent phosphorylation of N-acetyl-L-glutamate. The protein is Acetylglutamate kinase of Chlorobium chlorochromatii (strain CaD3).